The sequence spans 212 residues: Transmembrane emp24 domain-containing protein p24delta4 (212 aa).

The first 25 residues, 1 to 25 (MKKKMIPTTILLSALIFSLSPICEA), serve as a signal peptide directing secretion. Residues 26–179 (VWLTVPHTGS…RIVSEKTNSR (154 aa)) are Lumenal-facing. The GOLD domain maps to 35–147 (SKCVSEEIQS…IEGVELEFKK (113 aa)). Residue N82 is glycosylated (N-linked (GlcNAc...) asparagine). Positions 133–155 (ARKEKIEGVELEFKKLEGAVEAI) form a coiled coil. Residues R165 and R170 each carry the omega-N-methylated arginine modification. Residues 180–200 (VAWYSIMSLGICIVVSGLQIL) form a helical membrane-spanning segment. At 201–212 (YLKQYFEKKKLI) the chain is on the cytoplasmic side. Residues 205 to 206 (YF) carry the COPII vesicle coat-binding motif. Residues 205–212 (YFEKKKLI) carry the COPI vesicle coat-binding motif.

The protein belongs to the EMP24/GP25L family. Probably oligomerizes with other members of the EMP24/GP25L family. Associates with the COPI vesicle coat (coatomer). Associates with the COPII vesicle coat (coatomer).

It localises to the endoplasmic reticulum membrane. The protein localises to the golgi apparatus membrane. Functionally, involved in vesicular protein trafficking. Mainly functions in the early secretory pathway. Required for trafficking GLL23, a component of the PYK10 complex. May act as a receptor facilitating its packing into COPII carriers and export from the endoplasmic reticulum. This Arabidopsis thaliana (Mouse-ear cress) protein is Transmembrane emp24 domain-containing protein p24delta4 (CYB).